Reading from the N-terminus, the 612-residue chain is MKWYLWGAVVLLYSLFGSACSTEWRYDLSAYGLSPVENVDNAPAMARALEQIREKCEENQTIVVTLPKGRYEFYPDSAAERVYFISNHDQMNPKKVGLPFEGMKNMVFDGQGSELIFHGRMLPVSLLDSRNCVLKNFSIDFKHPQISQVKVVENDTVNGGITFEVAPWVHYEIRDSVFVAKGEGWELTPGSGIAFEGDTRHLVYNTSDIPVGVRGLIEVSPRLIKSPRWKDNRLVPGTVIAMRSWERPAPGVFLYHDVNTTLENIKVHYAEGMGLLAQMSENITLDGFSVCLKGADDPRYFTTQADATHFSACKGAIISKNGLYEGMMDDAINVHGTYLKVVRRVNDSTLVGRYMHPQSYGFEWGRVGDSVQFIHSSTMELIGARNRITAIKAVDQPDYRGAKEFEIRFENTVNPSIHEGSGFGIENLEWTPTVLFSDNLIRNNRARGSLFSTPRQTVVENNVFDHTSGTAILLCGDCNGWFETGACRNVLIRKNKFINSLTNMFQFTNAIISIYPEIPDLASQRKYFHSDIVIDANEFITFDRPLVYAKSVDGLVFTNNIVKQNKEYPAFHWNNYRFYFQRVIHSKIENNYFDEGFIRERDVLEENNGYDI.

Positions 1–19 (MKWYLWGAVVLLYSLFGSA) are cleaved as a signal peptide. The N-palmitoyl cysteine moiety is linked to residue C20. The S-diacylglycerol cysteine moiety is linked to residue C20. PbH1 repeat units lie at residues 431-453 (TPTVLFSDNLIRNNRARGSLFST), 454-476 (PRQTVVENNVFDHTSGTAILLCG), and 487-536 (CRNV…VIDA).

Belongs to the glycosyl hydrolase 110 family. B subfamily.

It localises to the cell membrane. It catalyses the reaction Hydrolysis of terminal, non-reducing branched (1-&gt;3)-alpha-D-galactosidic residues, producing free D-galactose.. The catalysed reaction is Hydrolysis of terminal, non-reducing linear (1-&gt;3)-alpha-D-galactosidic residues, producing free D-galactose.. The enzyme catalyses Hydrolysis of terminal, non-reducing alpha-D-galactose residues in alpha-D-galactosides, including galactose oligosaccharides, galactomannans and galactolipids.. Functionally, alpha-galactosidase. Removes both branched alpha-1,3-linked galactose residues of blood group B antigens and linear alpha-1,3-linked galactose structures. The sequence is that of Alpha-1,3-galactosidase B (glaB) from Parabacteroides distasonis (strain ATCC 8503 / DSM 20701 / CIP 104284 / JCM 5825 / NCTC 11152).